Here is a 293-residue protein sequence, read N- to C-terminus: Acetylglutamate kinase (293 aa).

Substrate-binding positions include 66-67 (GG), Arg-88, and Asn-190.

The protein belongs to the acetylglutamate kinase family. ArgB subfamily.

The protein localises to the cytoplasm. The catalysed reaction is N-acetyl-L-glutamate + ATP = N-acetyl-L-glutamyl 5-phosphate + ADP. Its pathway is amino-acid biosynthesis; L-arginine biosynthesis; N(2)-acetyl-L-ornithine from L-glutamate: step 2/4. Its function is as follows. Catalyzes the ATP-dependent phosphorylation of N-acetyl-L-glutamate. The chain is Acetylglutamate kinase from Thiobacillus denitrificans (strain ATCC 25259 / T1).